Reading from the N-terminus, the 763-residue chain is Phosphoglycerol transferase I (763 aa).

The next 4 helical transmembrane spans lie at 1–21 (MSEL…AWKA), 26–46 (WWFA…ITLF), 77–97 (ILPG…LGWI), and 108–128 (FGYS…SPAF).

Belongs to the OpgB family.

Its subcellular location is the cell inner membrane. The catalysed reaction is a phosphatidylglycerol + a membrane-derived-oligosaccharide D-glucose = a 1,2-diacyl-sn-glycerol + a membrane-derived-oligosaccharide 6-(glycerophospho)-D-glucose.. The protein operates within glycan metabolism; osmoregulated periplasmic glucan (OPG) biosynthesis. Its function is as follows. Transfers a phosphoglycerol residue from phosphatidylglycerol to the membrane-bound nascent glucan backbones. This chain is Phosphoglycerol transferase I, found in Escherichia coli (strain SMS-3-5 / SECEC).